Reading from the N-terminus, the 270-residue chain is UPF0354 protein BA_4944/GBAA_4944/BAS4588 (270 aa).

This sequence belongs to the UPF0354 family.

The chain is UPF0354 protein BA_4944/GBAA_4944/BAS4588 from Bacillus anthracis.